The primary structure comprises 153 residues: MVNVEDRLYEGIAQQAGIAGCTLVDARMVRTGRAVALQVFIEKDETTAVTIEDCAAVSRQLSLWLDVENPIHGAYRLEVSSPGLDRPLKNLHDFERFKGSQAEIHLHGLTQGRRRLQGELLGVEDQKIVLKNAEGRWTFALDDIHKARLVPQW.

It belongs to the RimP family.

It is found in the cytoplasm. Its function is as follows. Required for maturation of 30S ribosomal subunits. The polypeptide is Ribosome maturation factor RimP (Acidithiobacillus ferrooxidans (strain ATCC 53993 / BNL-5-31) (Leptospirillum ferrooxidans (ATCC 53993))).